A 61-amino-acid chain; its full sequence is MFTLKKTLLLLFFLGTINLSLCEEERNAEEERRDGDDEMDVEVKKRFITGLISGLMKALGK.

The N-terminal stretch at 1 to 22 (MFTLKKTLLLLFFLGTINLSLC) is a signal peptide. A propeptide spans 23–44 (EEERNAEEERRDGDDEMDVEVK) (removed in mature form). At K61 the chain carries Lysine amide.

It belongs to the frog skin active peptide (FSAP) family. Temporin subfamily. Expressed by the skin glands.

The protein resides in the secreted. In terms of biological role, antimicrobial peptide. Active against some Gram-positive and Gram-negative bacterial strains. Active against fungus C.glabrata 090902 but not against C.albicans ATCC 12231. Shows weak hemolytic activity against human erythrocytes. The polypeptide is Temporin-SN4 (Sylvirana spinulosa (Fine-spined frog)).